The chain runs to 309 residues: Peptidyl-prolyl cis-trans isomerase 9 (309 aa).

Residues 8 to 173 form the PPIase cyclophilin-type domain; that stretch reads FLDISVDENL…AKVLISNCGE (166 aa). Composition is skewed to basic and acidic residues over residues 217–229, 239–265, 280–289, and 296–309; these read NEKKHEMRNDKRR, RSHEKNRDYKKENRGDSSRSQPRRDEN, ERSATPEHWR, and WVHDSHKHPEEDLV. Residues 217–309 are disordered; that stretch reads NEKKHEMRND…SHKHPEEDLV (93 aa).

The protein belongs to the cyclophilin-type PPIase family. In terms of tissue distribution, co-expressed with pdi-1 in the syncytial hypodermis.

It carries out the reaction [protein]-peptidylproline (omega=180) = [protein]-peptidylproline (omega=0). Its function is as follows. PPIases accelerate the folding of proteins. It catalyzes the cis-trans isomerization of proline imidic peptide bonds in oligopeptides. Thought to function as a catalyst in the folding and modification of cuticle collagens. This chain is Peptidyl-prolyl cis-trans isomerase 9 (cyn-9), found in Caenorhabditis elegans.